A 367-amino-acid chain; its full sequence is Aflatoxin B1 aldehyde reductase member 2 (367 aa).

Residues 1-31 are compositionally biased toward low complexity; that stretch reads MLRAASRAVGRAAVRSAQRSGTSVGRPLAMS. The interval 1 to 45 is disordered; that stretch reads MLRAASRAVGRAAVRSAQRSGTSVGRPLAMSRPPPPRAASGAPLR. Residues 1–46 constitute a mitochondrion transit peptide; the sequence is MLRAASRAVGRAAVRSAQRSGTSVGRPLAMSRPPPPRAASGAPLRP. Position 40 is a phosphoserine (Ser-40). The residue at position 48 (Thr-48) is a Phosphothreonine. NADP(+) is bound at residue Asp-80. Tyr-85 acts as the Proton donor in catalysis. N6-acetyllysine is present on Lys-136. His-149 lines the substrate pocket. NADP(+) contacts are provided by residues 179 to 180, Gln-205, 234 to 244, and Arg-258; these read SN and NPLAGGLLTGK. Lys-244 is subject to N6-succinyllysine. Substrate-binding residues include Tyr-268 and Arg-271. An NADP(+)-binding site is contributed by 326–334; sequence SSLEQLEQN. Arg-367 serves as a coordination point for substrate.

Belongs to the aldo/keto reductase family. Aldo/keto reductase 2 subfamily. As to quaternary structure, homodimer. Expressed in liver, kidney, testis and brain with low levels in skeletal muscle, spleen, heart and lung.

Its subcellular location is the mitochondrion. It is found in the golgi apparatus. It localises to the cytoplasm. It catalyses the reaction 4-hydroxybutanoate + NADP(+) = succinate semialdehyde + NADPH + H(+). With respect to regulation, inhibited by citrate, succinate and tartrate. Functionally, catalyzes the NADPH-dependent reduction of succinic semialdehyde to gamma-hydroxybutyrate. May have an important role in producing the neuromodulator gamma-hydroxybutyrate (GHB). Has broad substrate specificity. Can reduce the dialdehyde protein-binding form of aflatoxin B1 (AFB1) to the non-binding AFB1 dialcohol. May be involved in protection of liver against the toxic and carcinogenic effects of AFB1, a potent hepatocarcinogen. In Mus musculus (Mouse), this protein is Aflatoxin B1 aldehyde reductase member 2.